A 296-amino-acid polypeptide reads, in one-letter code: Ribosomal RNA small subunit methyltransferase A (296 aa).

6 residues coordinate S-adenosyl-L-methionine: N31, L33, G58, E79, D104, and N129.

Belongs to the class I-like SAM-binding methyltransferase superfamily. rRNA adenine N(6)-methyltransferase family. RsmA subfamily.

It is found in the cytoplasm. The catalysed reaction is adenosine(1518)/adenosine(1519) in 16S rRNA + 4 S-adenosyl-L-methionine = N(6)-dimethyladenosine(1518)/N(6)-dimethyladenosine(1519) in 16S rRNA + 4 S-adenosyl-L-homocysteine + 4 H(+). Its function is as follows. Specifically dimethylates two adjacent adenosines (A1518 and A1519) in the loop of a conserved hairpin near the 3'-end of 16S rRNA in the 30S particle. May play a critical role in biogenesis of 30S subunits. The polypeptide is Ribosomal RNA small subunit methyltransferase A (Shouchella clausii (strain KSM-K16) (Alkalihalobacillus clausii)).